The sequence spans 1098 residues: MEELGAAASGAGGGGGGGEEHGGGRSNKRGAGNRAANEEETRNKPKLRDRITSFRKSATKREKPVIQHSIDYQTAVVEIPPALIVHDDRSLILSEKEVLDLFEKMMEDMNLNEEKKAPLRKKDFSIKREMVVQYISATSKSIVGSKVLGGLKNSKHEFTLSSQEYVHELRSGISDEKLLNCLESLRVSLTSHPVSWVNNFGYEGLGVLLDVLEKLLDKKQQENIDKKNQYKVIQCLKAFMNNKFGLQRILGDERSLLLLARAIDPKQQNMMTEIVKILSAICIVGEENILDKLLGGITAAAELNNRERFSPIVEGLENNEALHLQVACMQFINALVTSPYDLDFRIHLRNEFLRCGLKAMLPTLKEIENEGLDIQLRVFEENKEDDLSELSHRLNDIRAEMDDINEVYHLLYNMLKDTAAEPYLLSILQHFLLIRNDYYIRPQYYKIIEECVSQIVLHCSGMDPDFKYRQRIDFDFTHLLDACVNKAKVEENEQKAMEFSKKFDEEFTARQEAQAELQKRDEKIKELETEIQQLRGQGVPSAIPGPPPPPPLPGAGPCPPPPPPPPPPPPLPGVVPPPPPPLPGMPGIPPPPPPPLSGVPPPPPPPGGVFPLLSGPIELPYGMKQKKLYKPDIPMKRINWSKIEPKELSENCVWLKLKEEKYENADLFAKLALTFPSQMKGQRNTEAAEENRSGPPKKKVKELRILDTKTAQNLSIFLGSYRMPYEEIKNIILEVNEEMLSEALIQNLVKYLPDQNALRELAQLKSEYDDLCEPEQFGVVMSTVKMLRPRLTSILFKLTFEEHVNNIKPSIIAVTLACEELKKSESFKRLLELILLVGNYMNSGSRNAQSLGFKINFLCKIKDTKSADQKSTLLHFLAEICDEKYRDILKFPDELEHVESAGKVSAQILKSNLVAMEQSILHLEKNIKNFPPAESHHDKFVEKMMSFTQNAREQYDKLSTMHSNMLKLYESLGEYFIFDPNTVNMEEFFGDLNTFRTLFLEALKENHKRKEMEEKSRRAKLAKEKAEQEKLERQKKKKQLIDINKEGDETGVMDNLLEALQSGAAFRDRRKRIPRNPDNRRPPLERSRSRHNGAMSSK.

M1 is subject to N-acetylmethionine. The segment at 1 to 62 is disordered; it reads MEELGAAASG…SFRKSATKRE (62 aa). The segment covering 36 to 52 has biased composition (basic and acidic residues); that stretch reads ANEEETRNKPKLRDRIT. In terms of domain architecture, GBD/FH3 spans 90–463; the sequence is SLILSEKEVL…QIVLHCSGMD (374 aa). 2 coiled-coil regions span residues 375–416 and 490–539; these read QLRV…NMLK and EENE…GQGV. Disordered stretches follow at residues 537–565, 578–611, 679–699, 1007–1047, and 1063–1098; these read QGVP…PPPP, PPPP…GVFP, MKGQ…PKKK, HKRK…NKEG, and GAAF…MSSK. 2 stretches are compositionally biased toward pro residues: residues 543-565 and 578-608; these read IPGP…PPPP and PPPP…PPGG. An FH1 domain is found at 544 to 620; sequence PGPPPPPPLP…PLLSGPIELP (77 aa). Residues 625–1025 enclose the FH2 domain; the sequence is QKKLYKPDIP…SRRAKLAKEK (401 aa). The stretch at 999-1050 forms a coiled coil; that stretch reads FLEALKENHKRKEMEEKSRRAKLAKEKAEQEKLERQKKKKQLIDINKEGDET. Composition is skewed to basic and acidic residues over residues 1007 to 1032 and 1075 to 1087; these read HKRK…EKLE and RNPD…LERS. The region spanning 1048–1078 is the DAD domain; it reads DETGVMDNLLEALQSGAAFRDRRKRIPRNPD.

This sequence belongs to the formin homology family. Diaphanous subfamily. Interacts with MAPRE1 and APC.

Functionally, may be involved in oogenesis. The chain is Protein diaphanous homolog 2 (Diaph2) from Mus musculus (Mouse).